The chain runs to 179 residues: ATP synthase subunit delta (179 aa).

This sequence belongs to the ATPase delta chain family. In terms of assembly, F-type ATPases have 2 components, F(1) - the catalytic core - and F(0) - the membrane proton channel. F(1) has five subunits: alpha(3), beta(3), gamma(1), delta(1), epsilon(1). F(0) has three main subunits: a(1), b(2) and c(10-14). The alpha and beta chains form an alternating ring which encloses part of the gamma chain. F(1) is attached to F(0) by a central stalk formed by the gamma and epsilon chains, while a peripheral stalk is formed by the delta and b chains.

The protein resides in the cell inner membrane. Its function is as follows. F(1)F(0) ATP synthase produces ATP from ADP in the presence of a proton or sodium gradient. F-type ATPases consist of two structural domains, F(1) containing the extramembraneous catalytic core and F(0) containing the membrane proton channel, linked together by a central stalk and a peripheral stalk. During catalysis, ATP synthesis in the catalytic domain of F(1) is coupled via a rotary mechanism of the central stalk subunits to proton translocation. In terms of biological role, this protein is part of the stalk that links CF(0) to CF(1). It either transmits conformational changes from CF(0) to CF(1) or is implicated in proton conduction. This Maricaulis maris (strain MCS10) (Caulobacter maris) protein is ATP synthase subunit delta.